Here is an 846-residue protein sequence, read N- to C-terminus: ATR-interacting protein mus304 (846 aa).

Disordered regions lie at residues 20 to 40 (DVSV…FDGI), 90 to 109 (QGST…QKKP), and 135 to 162 (EPQK…KTTT). Residues 144-162 (TSTSRITTSSISVQQKTTT) are compositionally biased toward low complexity. Coiled-coil stretches lie at residues 168-240 (ATQS…LADE) and 327-359 (EYSE…LQAK). Positions 504–510 (EELLFDL) match the EEXXXDL motif motif. Positions 651 to 681 (GAVQGSVSNGSTSASVSNPNQNSNSSTTQRG) are disordered. Low complexity predominate over residues 655–676 (GSVSNGSTSASVSNPNQNSNSS).

The protein belongs to the ATRIP family. As to quaternary structure, interacts with ATR/mei-41. In terms of tissue distribution, highly expressed in the oocyte and nurse cells from stage 5 onward and in embryos prior to during nuclear division 14. Then, it decreases to background levels during interphase 14. Weakly or not expressed in stage embryos and imaginal disks.

Its subcellular location is the cytoplasm. Its function is as follows. DNA damage checkpoint protein required for chromosome break repair and for genomic stability during development. This chain is ATR-interacting protein mus304 (mus304), found in Drosophila melanogaster (Fruit fly).